A 599-amino-acid chain; its full sequence is ATP-dependent rRNA helicase SPB4 (599 aa).

Residues 7 to 35 carry the Q motif motif; sequence WDTLDYTLQPWIRTAVDAMGYETMTPVQA. The Helicase ATP-binding domain occupies 38–224; it reads IPLFARNKDV…KTGMRNPVKV (187 aa). Position 51-58 (51-58) interacts with ATP; sequence SVTGSGKT. The DEAD box signature appears at 172–175; it reads DEAD. The Helicase C-terminal domain maps to 248-415; it reads KLQLLLTLLN…GLPEIIRAWI (168 aa). The stretch at 501-561 forms a coiled coil; sequence QREKARKLAK…LKRKAIEEKL (61 aa). Residues 559–599 form a disordered region; the sequence is EKLIENSDDSDNEVETDWKDIVRQRKKKKTNSGMQGDFGDL. Acidic residues predominate over residues 564–573; it reads NSDDSDNEVE.

It belongs to the DEAD box helicase family. DDX55/SPB4 subfamily. In terms of assembly, component of pre-60S ribosomal complexes.

It is found in the nucleus. The protein resides in the nucleolus. The catalysed reaction is ATP + H2O = ADP + phosphate + H(+). Functionally, ATP-binding RNA helicase involved in the biogenesis of 60S ribosomal subunits. Binds 90S pre-ribosomal particles and dissociates from pre-60S ribosomal particles after processing of 27SB pre-rRNA. Required for the normal formation of 18S rRNA through the processing of pre-rRNAs at sites A0, A1 and A2, and the normal formation of 25S and 5.8S rRNAs through the processing of pre-rRNAs at sites C1 and C2. The sequence is that of ATP-dependent rRNA helicase SPB4 from Eremothecium gossypii (strain ATCC 10895 / CBS 109.51 / FGSC 9923 / NRRL Y-1056) (Yeast).